A 377-amino-acid chain; its full sequence is Probable protein phosphatase 2C 7 (377 aa).

Disordered stretches follow at residues 1-68 and 80-99; these read MAAH…GKAA and TTVAEATATGPPKGSDEDDE. Positions 21-39 are enriched in low complexity; the sequence is PPAAEAEAAAAAAAIARAA. Positions 51-63 are enriched in basic residues; sequence GVRHPLKHRRFRA. Low complexity predominate over residues 80 to 89; that stretch reads TTVAEATATG. Residues 115–361 enclose the PPM-type phosphatase domain; it reads SCGYSSFRGR…DNITCIVVKF (247 aa). 4 residues coordinate Mn(2+): aspartate 151, glycine 152, aspartate 313, and aspartate 352.

The protein belongs to the PP2C family. It depends on Mg(2+) as a cofactor. Mn(2+) is required as a cofactor.

The catalysed reaction is O-phospho-L-seryl-[protein] + H2O = L-seryl-[protein] + phosphate. The enzyme catalyses O-phospho-L-threonyl-[protein] + H2O = L-threonyl-[protein] + phosphate. This is Probable protein phosphatase 2C 7 from Oryza sativa subsp. japonica (Rice).